Consider the following 106-residue polypeptide: Glycoprotein GP16 (106 aa).

In terms of processing, glycosylated.

The protein resides in the host cytoplasm. Functionally, may be involved in formation or transport of the nucleocapsid-containing vesicles around the nuclear membrane. In Autographa californica nuclear polyhedrosis virus (AcMNPV), this protein is Glycoprotein GP16 (GP16).